We begin with the raw amino-acid sequence, 446 residues long: D-inositol 3-phosphate glycosyltransferase (446 aa).

Residue H19 participates in 1D-myo-inositol 3-phosphate binding. UDP-N-acetyl-alpha-D-glucosamine contacts are provided by residues 25-26 (QP) and G33. Residues 30 to 35 (DAGGMN), K88, Y121, T145, and R165 each bind 1D-myo-inositol 3-phosphate. UDP-N-acetyl-alpha-D-glucosamine is bound by residues R239, K244, and Q303. Mg(2+)-binding residues include Y312, R313, and S315. UDP-N-acetyl-alpha-D-glucosamine is bound by residues E325 and E333. A Mg(2+)-binding site is contributed by T339.

This sequence belongs to the glycosyltransferase group 1 family. MshA subfamily. In terms of assembly, homodimer.

It carries out the reaction 1D-myo-inositol 3-phosphate + UDP-N-acetyl-alpha-D-glucosamine = 1D-myo-inositol 2-acetamido-2-deoxy-alpha-D-glucopyranoside 3-phosphate + UDP + H(+). In terms of biological role, catalyzes the transfer of a N-acetyl-glucosamine moiety to 1D-myo-inositol 3-phosphate to produce 1D-myo-inositol 2-acetamido-2-deoxy-glucopyranoside 3-phosphate in the mycothiol biosynthesis pathway. The polypeptide is D-inositol 3-phosphate glycosyltransferase (Rhodococcus opacus (strain B4)).